Here is a 312-residue protein sequence, read N- to C-terminus: uncharacterized protein (312 aa).

Topologically, residues 1 to 14 are extracellular; the sequence is MSIVETCISFVSTN. Residues 15-35 form a helical membrane-spanning segment; that stretch reads PFYPFCTGLLLNCVVTPLYFW. The Cytoplasmic segment spans residues 36–41; sequence KTQNGR. Residues 42–62 traverse the membrane as a helical segment; that stretch reads IVVVSLLQFVVLYATAFISIG. Over 63 to 179 the chain is Extracellular; the sequence is TDKSLYRNKW…LEYDQDTATE (117 aa). The FAD-binding FR-type domain maps to 70-173; sequence NKWVALPLSK…KGPLGELEYD (104 aa). The chain crosses the membrane as a helical span at residues 180-200; the sequence is LGIIAGGSGITPVLQVLQEII. Topologically, residues 201–312 are cytoplasmic; sequence PSPEDLTHIS…GNGTDKVFVF (112 aa).

This sequence belongs to the flavoprotein pyridine nucleotide cytochrome reductase family. FAD serves as cofactor.

It localises to the membrane. This is an uncharacterized protein from Saccharomyces cerevisiae (strain ATCC 204508 / S288c) (Baker's yeast).